A 128-amino-acid chain; its full sequence is Glycine cleavage system H protein (128 aa).

In terms of domain architecture, Lipoyl-binding spans 22 to 104 (TVLVGITDYA…YGEGWIFRLK (83 aa)). Lys-63 is modified (N6-lipoyllysine).

This sequence belongs to the GcvH family. In terms of assembly, the glycine cleavage system is composed of four proteins: P, T, L and H. (R)-lipoate serves as cofactor.

Its function is as follows. The glycine cleavage system catalyzes the degradation of glycine. The H protein shuttles the methylamine group of glycine from the P protein to the T protein. In Thermus thermophilus (strain ATCC BAA-163 / DSM 7039 / HB27), this protein is Glycine cleavage system H protein.